Reading from the N-terminus, the 241-residue chain is 1-(5-phosphoribosyl)-5-[(5-phosphoribosylamino)methylideneamino] imidazole-4-carboxamide isomerase (241 aa).

Asp-8 acts as the Proton acceptor in catalysis. Asp-130 serves as the catalytic Proton donor.

Belongs to the HisA/HisF family.

It is found in the cytoplasm. The catalysed reaction is 1-(5-phospho-beta-D-ribosyl)-5-[(5-phospho-beta-D-ribosylamino)methylideneamino]imidazole-4-carboxamide = 5-[(5-phospho-1-deoxy-D-ribulos-1-ylimino)methylamino]-1-(5-phospho-beta-D-ribosyl)imidazole-4-carboxamide. It functions in the pathway amino-acid biosynthesis; L-histidine biosynthesis; L-histidine from 5-phospho-alpha-D-ribose 1-diphosphate: step 4/9. The protein is 1-(5-phosphoribosyl)-5-[(5-phosphoribosylamino)methylideneamino] imidazole-4-carboxamide isomerase of Flavobacterium psychrophilum (strain ATCC 49511 / DSM 21280 / CIP 103535 / JIP02/86).